A 428-amino-acid chain; its full sequence is Phosphomethylpyrimidine synthase 2 (428 aa).

Residues asparagine 65, methionine 94, tyrosine 123, histidine 158, 180-182, 221-224, and glutamate 260 contribute to the substrate site; these read SRG and DGMR. Residue histidine 264 coordinates Zn(2+). Tyrosine 287 is a substrate binding site. Histidine 328 is a Zn(2+) binding site. [4Fe-4S] cluster is bound by residues cysteine 405, cysteine 408, and cysteine 412.

This sequence belongs to the ThiC family. Requires [4Fe-4S] cluster as cofactor.

It catalyses the reaction 5-amino-1-(5-phospho-beta-D-ribosyl)imidazole + S-adenosyl-L-methionine = 4-amino-2-methyl-5-(phosphooxymethyl)pyrimidine + CO + 5'-deoxyadenosine + formate + L-methionine + 3 H(+). It participates in cofactor biosynthesis; thiamine diphosphate biosynthesis. In terms of biological role, catalyzes the synthesis of the hydroxymethylpyrimidine phosphate (HMP-P) moiety of thiamine from aminoimidazole ribotide (AIR) in a radical S-adenosyl-L-methionine (SAM)-dependent reaction. The polypeptide is Phosphomethylpyrimidine synthase 2 (Methanosarcina barkeri (strain Fusaro / DSM 804)).